The sequence spans 452 residues: Chromosomal replication initiator protein DnaA (452 aa).

The domain I, interacts with DnaA modulators stretch occupies residues 1–84 (MTENEQIFWN…SIEYVFEETQ (84 aa)). The domain II stretch occupies residues 84-110 (QSTSNSPQISQNKTAELATETLPFVQN). The interval 111-329 (DLNPKYSFDN…GALKDISLVA (219 aa)) is domain III, AAA+ region. Glycine 155, glycine 157, lysine 158, and threonine 159 together coordinate ATP. The domain IV, binds dsDNA stretch occupies residues 330–452 (NFKKLDVITV…EMETIKNKIK (123 aa)).

This sequence belongs to the DnaA family. As to quaternary structure, oligomerizes as a right-handed, spiral filament on DNA at oriC.

The protein localises to the cytoplasm. In terms of biological role, plays an essential role in the initiation and regulation of chromosomal replication. ATP-DnaA binds to the origin of replication (oriC) to initiate formation of the DNA replication initiation complex once per cell cycle. Binds the DnaA box (a 9 base pair repeat at the origin) and separates the double-stranded (ds)DNA. Forms a right-handed helical filament on oriC DNA; dsDNA binds to the exterior of the filament while single-stranded (ss)DNA is stabiized in the filament's interior. The ATP-DnaA-oriC complex binds and stabilizes one strand of the AT-rich DNA unwinding element (DUE), permitting loading of DNA polymerase. After initiation quickly degrades to an ADP-DnaA complex that is not apt for DNA replication. Binds acidic phospholipids. In Streptococcus mutans serotype c (strain ATCC 700610 / UA159), this protein is Chromosomal replication initiator protein DnaA.